Reading from the N-terminus, the 400-residue chain is Large envelope protein (400 aa).

Position 1 is an N-acetylmethionine (methionine 1). The interval 1–20 (MGGWSAKPRKGMGTNLSVPN) is disordered. Glycine 2 carries the N-myristoyl glycine; by host lipid modification. A pre-S1 region spans residues 2–119 (GGWSAKPRKG…PPLRDSHPQA (118 aa)). The segment at 2-174 (GGWSAKPRKG…SSRTGDPALN (173 aa)) is pre-S. Over 2-181 (GGWSAKPRKG…ALNMENITSG (180 aa)) the chain is Virion surface; in external conformation. Residues 2–253 (GGWSAKPRKG…PGYRWMCLRR (252 aa)) are Intravirion; in internal conformation-facing. Residue tryptophan 4 is glycosylated (N-linked (GlcNAc...) asparagine). Residues 120–174 (MQWNSTAFQQALQDPRVRGLFFPAGGSSSGTVNPAPNIASHISSISSRTGDPALN) form a pre-S2 region. A helical membrane pass occupies residues 182–202 (FLGPLLVLQAGFFLLTRILTI). The Intravirion; in external conformation portion of the chain corresponds to 203 to 253 (PQSLDSWWTSLNFLGGSPVCLGQNSQSPTSNHSPTSCPPICPGYRWMCLRR). Residues 254–274 (FIIFLFILLLCLIFLLVLLDY) traverse the membrane as a helical segment. Residues 275–348 (QGMLPVCPLI…WASVRFSWLS (74 aa)) are Virion surface-facing. Residue asparagine 320 is glycosylated (N-linked (GlcNAc...) asparagine; by host). Residues 349 to 369 (LLVPFVQWFVGLSPTVWLSVI) form a helical membrane-spanning segment. Residues 370–375 (WMMWYW) are Intravirion-facing. A helical transmembrane segment spans residues 376-398 (GPSLYNILSPFIPLLPIFFCLWV). Residues 399-400 (YI) lie on the Virion surface side of the membrane.

This sequence belongs to the orthohepadnavirus major surface antigen family. In terms of assembly, in its internal form (Li-HBsAg), interacts with the capsid protein and with the isoform S. Interacts with host chaperone CANX. As to quaternary structure, associates with host chaperone CANX through its pre-S2 N glycan; this association may be essential for isoform M proper secretion. Interacts with isoform L. Interacts with the antigens of satellite virus HDV (HDVAgs); this interaction is required for encapsidation of HDV genomic RNA. In terms of processing, isoform M is N-terminally acetylated by host at a ratio of 90%, and N-glycosylated by host at the pre-S2 region. Myristoylated.

It is found in the virion membrane. Functionally, the large envelope protein exists in two topological conformations, one which is termed 'external' or Le-HBsAg and the other 'internal' or Li-HBsAg. In its external conformation the protein attaches the virus to cell receptors and thereby initiating infection. This interaction determines the species specificity and liver tropism. This attachment induces virion internalization predominantly through caveolin-mediated endocytosis. The large envelope protein also assures fusion between virion membrane and endosomal membrane. In its internal conformation the protein plays a role in virion morphogenesis and mediates the contact with the nucleocapsid like a matrix protein. The middle envelope protein plays an important role in the budding of the virion. It is involved in the induction of budding in a nucleocapsid independent way. In this process the majority of envelope proteins bud to form subviral lipoprotein particles of 22 nm of diameter that do not contain a nucleocapsid. The chain is Large envelope protein from Hepatitis B virus genotype A1 subtype adw2 (isolate Southern-Africa/Cai) (HBV-A).